A 416-amino-acid chain; its full sequence is Glutamate dehydrogenase (416 aa).

The active site involves K105.

This sequence belongs to the Glu/Leu/Phe/Val dehydrogenases family. In terms of assembly, homohexamer.

It carries out the reaction L-glutamate + NAD(+) + H2O = 2-oxoglutarate + NH4(+) + NADH + H(+). The catalysed reaction is L-glutamate + NADP(+) + H2O = 2-oxoglutarate + NH4(+) + NADPH + H(+). This chain is Glutamate dehydrogenase (gdhA), found in Thermotoga maritima (strain ATCC 43589 / DSM 3109 / JCM 10099 / NBRC 100826 / MSB8).